Here is a 305-residue protein sequence, read N- to C-terminus: Taste receptor type 2 member 13 (305 aa).

Over 1–7 the chain is Extracellular; it reads MGSSLYD. The chain crosses the membrane as a helical span at residues 8–28; that stretch reads ILTIVMIAEFIFGNVTNGFIV. Topologically, residues 29-42 are cytoplasmic; sequence LTNCIAWLSKRTLS. Residues 43–63 traverse the membrane as a helical segment; that stretch reads FIGWIQLFLAISRVVLIWEML. The Extracellular portion of the chain corresponds to 64 to 88; it reads LAWLKYMKYSFSYLAGTELRVMMLT. Residues 89-109 traverse the membrane as a helical segment; it reads WVVSNHFSLWLATILSIFYLL. At 110–128 the chain is on the cytoplasmic side; it reads KIASFSRPVFLYLKWRVKK. The helical transmembrane segment at 129–149 threads the bilayer; it reads VLLLILLGNLIFLMFNILQIN. At 150-182 the chain is on the extracellular side; that stretch reads THIEDWMDQYKRNITWDSRVNEFVGFSNLVLLE. Asn162 is a glycosylation site (N-linked (GlcNAc...) asparagine). A helical transmembrane segment spans residues 183 to 203; it reads MIMFSVTPFTVALVSFILLIF. At 204 to 232 the chain is on the cytoplasmic side; the sequence is SLWKHLQKMHLSSRGERDPSTKAHVNALR. A helical membrane pass occupies residues 233–253; sequence IMVSFLLLYATYFISFFISLI. Topologically, residues 254–262 are extracellular; the sequence is PMAHKKGLD. Residues 263 to 283 form a helical membrane-spanning segment; sequence LMFSLTVGLFYPSSHSFILIL. At 284–305 the chain is on the cytoplasmic side; the sequence is GHSNLRHSSCLVITYLRCKEKD.

The protein belongs to the G-protein coupled receptor T2R family. In terms of tissue distribution, expressed in subsets of taste receptor cells of the tongue and palate epithelium and exclusively in gustducin-positive cells. Expressed in 15% taste bud cells in circumvallate and foliate papillae but only in 2% in fungiform papillae. Expressed in the duodenum, antrum and fundus (part of the stomach).

It localises to the membrane. In terms of biological role, receptor that may play a role in the perception of bitterness and is gustducin-linked. May play a role in sensing the chemical composition of the gastrointestinal content. The activity of this receptor may stimulate alpha gustducin, mediate PLC-beta-2 activation and lead to the gating of TRPM5. This Rattus norvegicus (Rat) protein is Taste receptor type 2 member 13 (Tas2r13).